We begin with the raw amino-acid sequence, 525 residues long: Ankyrin repeat domain-containing protein SOWAHC (525 aa).

The interval 84 to 263 is disordered; that stretch reads CEGPSEPSGD…EESSGGGSVT (180 aa). At serine 88 the chain carries Phosphoserine. A compositionally biased stretch (low complexity) spans 101-112; that stretch reads AEPEAPDGPAGP. Residues serine 126, serine 213, and serine 226 each carry the phosphoserine modification. Residues 230–241 show a composition bias toward gly residues; the sequence is SSGGGRGRGGGD. The segment covering 242-251 has biased composition (low complexity); the sequence is SDSASVASSS. ANK repeat units lie at residues 301–330 and 340–370; these read TGFT…KHQL and GGYT…DVDI. The interval 434–525 is disordered; sequence DGGDHHHHHH…TLRPKSNVFG (92 aa). Residues 468–477 show a composition bias toward basic residues; it reads IKPRLNKIRF. Basic and acidic residues predominate over residues 489–509; that stretch reads RDPEQPLEGRGEEGVGEERPV.

Belongs to the SOWAH family.

The chain is Ankyrin repeat domain-containing protein SOWAHC (SOWAHC) from Homo sapiens (Human).